Consider the following 3969-residue polypeptide: Histone-lysine N-methyltransferase 2A (3969 aa).

Disordered regions lie at residues 1 to 108, 132 to 253, and 301 to 352; these read MAHS…LLRV, VFGE…EDSL, and RRRG…RQSP. The short motif at 6 to 25 is the Menin-binding motif (MBM) element; sequence RWRFPARPGTTGGGGGGGRR. The span at 15–29 shows a compositional bias: gly residues; the sequence is TTGGGGGGGRRGLGG. Low complexity-rich tracts occupy residues 59 to 69 and 77 to 104; these read AVAAAAAAAGS and GAAA…SGPA. An Integrase domain-binding motif 1 (IBM1) motif is present at residues 123 to 134; it reads GTNLRRFRAVFG. Phosphoserine; by CK2 occurs at positions 136 and 142. An Integrase domain-binding motif 2 (IBM2) motif is present at residues 147–152; the sequence is QFLGFG. The residue at position 153 (Ser-153) is a Phosphoserine. Residues 169–180 constitute a DNA-binding region (a.T hook 1); sequence KTSPRKPRGRPR. Ser-197 is subject to Phosphoserine. Basic and acidic residues-rich tracts occupy residues 202–220 and 237–253; these read SETK…SIEK and HGKD…EDSL. Residues 217 to 227 constitute a DNA-binding region (a.T hook 2); that stretch reads SIEKKRGRPPT. Residue Lys-239 is modified to N6-acetyllysine. The a.T hook 3 DNA-binding region spans 301 to 309; the sequence is RRRGRPPST. Residues 323-347 show a composition bias toward basic and acidic residues; the sequence is ELEKPQKVRKDKEGTPPLTKEDKTV. N6-acetyllysine is present on Lys-373. Residues 445 to 585 form a disordered region; it reads STPNSRFSAP…SSISDHTPWL (141 aa). A compositionally biased stretch (low complexity) spans 452 to 491; the sequence is SAPSCGSSEKSSAASQHSSQMSSDSSRSSSPSVDTSTDSQ. Ser-518 carries the post-translational modification Phosphoserine. Over residues 546 to 559 the composition is skewed to low complexity; that stretch reads LSTLQSAPQQQTSS. Pro residues predominate over residues 560–573; the sequence is SPPPPLLTPPPPLQ. At Lys-636 the chain carries N6-acetyllysine. Ser-680 bears the Phosphoserine mark. Disordered stretches follow at residues 713-780, 798-949, 1038-1066, and 1106-1166; these read ESVT…SSSL, FPSH…TSVT, EKSK…VRGP, and SSMG…VPED. The span at 716–732 shows a compositional bias: polar residues; it reads TLPSNRTSAGTSSSGVS. Positions 762 to 780 are enriched in low complexity; the sequence is LSSSELSPLTPPSSVSSSL. The segment covering 798-808 has biased composition (polar residues); it reads FPSHSLTQSGE. Residues 820–841 show a composition bias toward low complexity; sequence TSAPAEPFSSSSPTPLFPWFTP. Position 840 is a phosphothreonine (Thr-840). Over residues 846-890 the composition is skewed to basic and acidic residues; sequence ERGRNKDKAPEELSKDRDADKSVEKDKSRERDREREKENKRESRK. Phosphoserine is present on residues Ser-926 and Ser-1056. Polar residues predominate over residues 1043 to 1062; it reads LKQTDQPKAQGQESDSSETS. Lys-1130 bears the N6-acetyllysine mark. A CXXC-type zinc finger spans residues 1147–1195; that stretch reads KKGRRSRRCGQCPGCQVPEDCGVCTNCLDKPKFGGRNIKKQCCKMRKCQ. Residues Cys-1155, Cys-1158, Cys-1161, Cys-1167, Cys-1170, Cys-1173, Cys-1189, and Cys-1194 each contribute to the Zn(2+) site. Residues 1200–1375 are disordered; the sequence is MPSKAYLQKQ…PPVNKQENAG (176 aa). Basic and acidic residues predominate over residues 1220–1232; it reads SKTSEKKDSKESS. Residues 1233-1243 are compositionally biased toward low complexity; the sequence is VVKNVVDSSQK. The residue at position 1235 (Lys-1235) is an N6-acetyllysine. A compositionally biased stretch (basic and acidic residues) spans 1248-1273; sequence AREDPAPKKSSSEPPPRKPVEEKSEE. The span at 1284-1300 shows a compositional bias: polar residues; that stretch reads KQATTPASRKSSKQVSQ. Pro residues predominate over residues 1304 to 1313; the sequence is VIPPQPPTTG. 3 consecutive PHD-type zinc fingers follow at residues 1431–1482, 1479–1533, and 1566–1627; these read RVVC…CKFC, CKFC…CVRC, and GNFC…CTER. An interaction with histone H3K4me3 region spans residues 1584–1600; that stretch reads KMMQCGKCDRWVHSKCE. Residues 1635–1765 form the Bromo domain; it reads ALEKELQISL…SFFIRQMERV (131 aa). 2 disordered regions span residues 1663–1713 and 1806–1869; these read YRQA…GVKR and QERE…GIED. A compositionally biased stretch (pro residues) spans 1826–1847; sequence APKPKGPGEPDSPTPLHPPTPP. Position 1837 is a phosphoserine (Ser-1837). The residue at position 1845 (Thr-1845) is a Phosphothreonine. Position 1858 is a phosphoserine (Ser-1858). The segment at 1870 to 1910 adopts a C2HC pre-PHD-type zinc-finger fold; the sequence is NRQCALCLTYGDDSANDAGRLLYIGQNEWTHVNCALWSAEV. A PHD-type 4 zinc finger spans residues 1931–1978; sequence LRCEFCQKPGATVGCCLTSCTSNYHFMCSRAKNCVFLDDKKVYCQRHR. In terms of domain architecture, FYR N-terminal spans 2018–2074; that stretch reads NIHMMIGSMTIDCLGILNDLSDCEDKLFPIGYQCSRVYWSTTDARKRCVYTCKIVEC. Disordered stretches follow at residues 2081 to 2133, 2145 to 2232, 2275 to 2333, 2373 to 2460, 2475 to 2618, 2647 to 2675, and 2713 to 2821; these read PDIN…TSGS, IRTP…TTGT, NKNS…KLAP, RGQR…EGNL, GQRP…RYPR, FYSS…STSD, and KISQ…KNLL. A compositionally biased stretch (polar residues) spans 2095-2115; the sequence is IAHSPTSFTESSSKESQNTAE. Phosphoserine is present on Ser-2098. Position 2147 is a phosphothreonine (Thr-2147). Phosphoserine is present on residues Ser-2151 and Ser-2201. Positions 2214-2232 are enriched in polar residues; the sequence is RTGNTYSRNNVSSVSTTGT. Positions 2283–2302 are enriched in low complexity; sequence SSSSEMKQSSASDLVSKSSS. 2 stretches are compositionally biased toward polar residues: residues 2310 to 2319 and 2406 to 2421; these read VLSSKSSEGS and GMSN…MGSS. The segment covering 2432–2442 has biased composition (basic and acidic residues); sequence SCKETFKEKHS. Thr-2525 is modified (phosphothreonine). Residue Lys-2528 forms a Glycyl lysine isopeptide (Lys-Gly) (interchain with G-Cter in SUMO2) linkage. Composition is skewed to polar residues over residues 2543-2563 and 2573-2592; these read SPAS…SASE and PSPN…QNLP. Ser-2611 carries the phosphoserine modification. Over residues 2726–2741 the composition is skewed to polar residues; it reads SDTSVTATTRKSSQIP. A compositionally biased stretch (basic and acidic residues) spans 2744–2782; it reads NGKENGTENLKIDRPEDAGEKEHVTKSSVGHKNEPKMDN. Residues 2784-2795 are compositionally biased toward polar residues; sequence HSVSRVKTQGQD. At Ser-2796 the chain carries Phosphoserine. A compositionally biased stretch (low complexity) spans 2796–2805; sequence SLEAQLSSLE. Residues 2812–2821 are compositionally biased toward polar residues; sequence TSTPSDKNLL. A 9aaTAD motif is present at residues 2847 to 2855; the sequence is SDIMDFVLK. Position 2955 is a phosphoserine (Ser-2955). Position 2958 is an N6-acetyllysine (Lys-2958). 2 disordered regions span residues 2961–3064 and 3166–3244; these read TITE…NAAV and PAAT…SNIA. Composition is skewed to polar residues over residues 2963–2972 and 3016–3030; these read TEKSVASSES and HGNN…STPG. At Ser-3036 the chain carries Phosphoserine. Positions 3039–3064 are enriched in polar residues; it reads VPIQNQKYVPNSTDSPGPSQISNAAV. Low complexity predominate over residues 3171–3182; that stretch reads SSFPPNISNPPS. Residues 3198–3216 are compositionally biased toward polar residues; the sequence is VSESSQRTDLSTTVATPSS. Over residues 3218-3233 the composition is skewed to basic residues; sequence LKKRPISRLQTRKNKK. Thr-3372 carries the post-translational modification Phosphothreonine. An N6-acetyllysine modification is found at Lys-3462. Disordered stretches follow at residues 3464-3608 and 3620-3643; these read GIHS…GQPA and TQNP…SNFS. A compositionally biased stretch (polar residues) spans 3476 to 3489; it reads SGPQVSNFTQTVDA. A compositionally biased stretch (low complexity) spans 3508 to 3529; that stretch reads SPTSPGGSPSSPSSGQRSASPS. 3 positions are modified to phosphoserine: Ser-3511, Ser-3515, and Ser-3527. Over residues 3591–3603 the composition is skewed to polar residues; sequence QDTASVEQSSQKE. Residues 3666–3747 form the FYR C-terminal domain; sequence KKGLVFEISS…KHCRNYKFRF (82 aa). Residues 3762 to 3767 carry the WDR5 interaction motif (WIN) motif; sequence GSARAE. The segment at 3785-3808 is disordered; that stretch reads HRQPPEYNPNDEEEEEVQLKSARR. An SET domain is found at 3829–3945; it reads EAVGVYRSPI…RGEELTYDYK (117 aa). His-3839 and Arg-3841 together coordinate S-adenosyl-L-methionine. An S-methylcysteine; by autocatalysis modification is found at Cys-3882. Residues Tyr-3883 and 3906–3907 contribute to the S-adenosyl-L-methionine site; that span reads NH. Zn(2+) is bound by residues Cys-3909 and Cys-3957. The Post-SET domain occupies 3953–3969; sequence NKLPCNCGAKKCRKFLN. Asn-3958 lines the S-adenosyl-L-methionine pocket. Residues Cys-3959 and Cys-3964 each coordinate Zn(2+).

The protein belongs to the class V-like SAM-binding methyltransferase superfamily. Histone-lysine methyltransferase family. TRX/MLL subfamily. In terms of assembly, MLL cleavage product N320 heterodimerizes with MLL cleavage product C180 (via SET and FYRC domains). Component of some MLL1/MLL complex, at least composed of the core components KMT2A/MLL1, ASH2L, HCFC1/HCF1, HCFC2, WDR5, DPY30 and RBBP5, as well as the facultative components BACC1, CHD8, E2F6, HSP70, INO80C, KANSL1, LAS1L, MAX, MCRS1, MEN1, MGA, KAT8/MOF, PELP1, PHF20, PRP31, RING2, RUVB1/TIP49A, RUVB2/TIP49B, SENP3, TAF1, TAF4, TAF6, TAF7, TAF9 and TEX10. Forms a core complex with the evolutionary conserved subcomplex WRAD composed of WDR5, RBBP5, ASH2L/ASH2 and DPY30 subunits; WRAD differentially stimulates the methyltransferase activity. Interacts (via WIN motif) with WDR5; the interaction is direct. Interaction with WDR5 is required for stable interaction with ASH2L and RBBP5, and thereby also for optimal histone methyltransferase activity. Interacts with KAT8/MOF; the interaction is direct. Interacts with SBF1 and PPP1R15A. Interacts with ZNF335. Interacts with CLOCK and BMAL1 in a circadian manner. Interacts with PPIE; this results in decreased histone H3 methyltransferase activity. Interacts with CREBBP. Interacts with the WRAD complex composed of WDR5, RBBP5, ASH2L and DPY30. Interacts (via MBM motif) with MEN1. Interacts (via IBM motifs) with PSIP1 (via IBD domain) with moderate affinity whereas the KMT2A-MEN1 complex interacts with a greater affinity; MEN1 enhances interaction of KMT2A with PSIP1. Phosphorylation increases its affinity for PSIP1. Forms a complex with CREBBP and CREB1. (Microbial infection) Interacts with herpes virus 8/HHV-8 protein LANA1; this interaction regulates the MLL1 histone methyltransferase activity on viral DNA. Proteolytic cleavage by TASP1 generates MLL cleavage product N320 and MLL cleavage product C180, which reassemble through a non-covalent association. 2 cleavage sites exist, cleavage site 1 (CS1) and cleavage site 2 (CS2), to generate MLL cleavage products N320 and C180. CS2 is the major site. In terms of processing, phosphorylation increases its interaction with PSIP1. Post-translationally, auto-methylated at Cys-3882: auto-methylation is inhibited by the WRAD complex and unmodified histone H3. As to expression, heart, lung, brain and T- and B-lymphocytes.

The protein localises to the nucleus. It catalyses the reaction L-lysyl(4)-[histone H3] + S-adenosyl-L-methionine = N(6)-methyl-L-lysyl(4)-[histone H3] + S-adenosyl-L-homocysteine + H(+). The catalysed reaction is N(6)-methyl-L-lysyl(4)-[histone H3] + S-adenosyl-L-methionine = N(6),N(6)-dimethyl-L-lysyl(4)-[histone H3] + S-adenosyl-L-homocysteine + H(+). It carries out the reaction L-cysteinyl-[protein] + S-adenosyl-L-methionine = S-methyl-L-cysteinyl-[protein] + S-adenosyl-L-homocysteine + H(+). In terms of biological role, histone methyltransferase that plays an essential role in early development and hematopoiesis. Catalytic subunit of the MLL1/MLL complex, a multiprotein complex that mediates both methylation of 'Lys-4' of histone H3 (H3K4me) complex and acetylation of 'Lys-16' of histone H4 (H4K16ac). Catalyzes methyl group transfer from S-adenosyl-L-methionine to the epsilon-amino group of 'Lys-4' of histone H3 (H3K4) via a non-processive mechanism. Part of chromatin remodeling machinery predominantly forms H3K4me1 and H3K4me2 methylation marks at active chromatin sites where transcription and DNA repair take place. Has weak methyltransferase activity by itself, and requires other component of the MLL1/MLL complex to obtain full methyltransferase activity. Has no activity toward histone H3 phosphorylated on 'Thr-3', less activity toward H3 dimethylated on 'Arg-8' or 'Lys-9', while it has higher activity toward H3 acetylated on 'Lys-9'. Binds to unmethylated CpG elements in the promoter of target genes and helps maintain them in the nonmethylated state. Required for transcriptional activation of HOXA9. Promotes PPP1R15A-induced apoptosis. Plays a critical role in the control of circadian gene expression and is essential for the transcriptional activation mediated by the CLOCK-BMAL1 heterodimer. Establishes a permissive chromatin state for circadian transcription by mediating a rhythmic methylation of 'Lys-4' of histone H3 (H3K4me) and this histone modification directs the circadian acetylation at H3K9 and H3K14 allowing the recruitment of CLOCK-BMAL1 to chromatin. Also has auto-methylation activity on Cys-3882 in absence of histone H3 substrate. The protein is Histone-lysine N-methyltransferase 2A (KMT2A) of Homo sapiens (Human).